The primary structure comprises 462 residues: Solute carrier family 41 member 3 (462 aa).

The next 9 membrane-spanning stretches (helical) occupy residues 41 to 61, 121 to 141, 163 to 183, 194 to 214, 225 to 245, 258 to 278, 351 to 371, 380 to 400, and 424 to 444; these read CQVA…GLVM, LAVV…ASLM, VITA…IVIG, IATP…LALM, WYLT…WIFI, YGWF…LILS, VLLF…CLVE, IFVL…LYLA, and GLGD…DWLL.

It belongs to the SLC41A transporter family.

It is found in the mitochondrion inner membrane. The catalysed reaction is Mg(2+)(in) + 2 Na(+)(out) = Mg(2+)(out) + 2 Na(+)(in). Its function is as follows. Na(+)/Mg(2+) ion exchanger that acts as a predominant Mg(2+) efflux system at the mitochondrial inner membrane. This is Solute carrier family 41 member 3 (Slc41a3) from Rattus norvegicus (Rat).